The primary structure comprises 201 residues: Anthranilate synthase component 2 (201 aa).

A Glutamine amidotransferase type-1 domain is found at K2–S201. Position 59 to 61 (G59 to G61) interacts with L-glutamine. C89 serves as the catalytic Nucleophile; for GATase activity. L-glutamine contacts are provided by residues Q93 and S139–L140. Catalysis depends on for GATase activity residues H182 and E184.

Heterotetramer consisting of two non-identical subunits: a beta subunit (TrpG) and a large alpha subunit (TrpE).

The catalysed reaction is chorismate + L-glutamine = anthranilate + pyruvate + L-glutamate + H(+). Its pathway is amino-acid biosynthesis; L-tryptophan biosynthesis; L-tryptophan from chorismate: step 1/5. Its function is as follows. Part of a heterotetrameric complex that catalyzes the two-step biosynthesis of anthranilate, an intermediate in the biosynthesis of L-tryptophan. In the first step, the glutamine-binding beta subunit (TrpG) of anthranilate synthase (AS) provides the glutamine amidotransferase activity which generates ammonia as a substrate that, along with chorismate, is used in the second step, catalyzed by the large alpha subunit of AS (TrpE) to produce anthranilate. In the absence of TrpG, TrpE can synthesize anthranilate directly from chorismate and high concentrations of ammonia. In Leptospira biflexa, this protein is Anthranilate synthase component 2 (trpG).